The primary structure comprises 347 residues: Probable arabinogalactan endo-beta-1,4-galactanase A (347 aa).

The N-terminal stretch at 1 to 16 is a signal peptide; the sequence is MLFSYLLATLPLLANA. Residue Glu-150 is the Proton donor of the active site. Glu-260 acts as the Nucleophile in catalysis.

The protein belongs to the glycosyl hydrolase 53 family.

The protein localises to the secreted. The catalysed reaction is The enzyme specifically hydrolyzes (1-&gt;4)-beta-D-galactosidic linkages in type I arabinogalactans.. Endogalactanase involved in the degradation of plant cell wall polysaccharides, and more particularly of hairy regions of pectin. In Aspergillus oryzae (strain ATCC 42149 / RIB 40) (Yellow koji mold), this protein is Probable arabinogalactan endo-beta-1,4-galactanase A (galA).